The sequence spans 735 residues: Delta-1-pyrroline-5-carboxylate synthase 2 (735 aa).

The interval 1-315 (MGRGGIGGAG…WGCSKEATAR (315 aa)) is glutamate 5-kinase. Positions 79, 176, and 195 each coordinate substrate. ATP is bound by residues 215 to 216 (SD), 221 to 226 (YSGPPS), and 255 to 261 (RGGMQAK). The segment at 316–735 (EMAVAARDCS…VYTHRELPLQ (420 aa)) is gamma-glutamyl phosphate reductase.

This sequence in the N-terminal section; belongs to the glutamate 5-kinase family. In the C-terminal section; belongs to the gamma-glutamyl phosphate reductase family.

It catalyses the reaction L-glutamate + ATP = L-glutamyl 5-phosphate + ADP. The catalysed reaction is L-glutamate 5-semialdehyde + phosphate + NADP(+) = L-glutamyl 5-phosphate + NADPH + H(+). Its pathway is amino-acid biosynthesis; L-proline biosynthesis; L-glutamate 5-semialdehyde from L-glutamate: step 1/2. The protein operates within amino-acid biosynthesis; L-proline biosynthesis; L-glutamate 5-semialdehyde from L-glutamate: step 2/2. Its activity is regulated as follows. Feedback regulated by proline. In terms of biological role, P5CS plays a key role in proline biosynthesis, leading to osmoregulation in plants. Involved in abiotic stress tolerance. In Oryza sativa subsp. japonica (Rice), this protein is Delta-1-pyrroline-5-carboxylate synthase 2.